Reading from the N-terminus, the 95-residue chain is Citrate lyase acyl carrier protein (95 aa).

Ser-14 is subject to O-(phosphoribosyl dephospho-coenzyme A)serine.

Belongs to the CitD family. As to quaternary structure, oligomer with a subunit composition of (alpha,beta,gamma)6.

It is found in the cytoplasm. Functionally, covalent carrier of the coenzyme of citrate lyase. The chain is Citrate lyase acyl carrier protein from Haemophilus influenzae (strain ATCC 51907 / DSM 11121 / KW20 / Rd).